The chain runs to 293 residues: Extracellular metalloprotease PODANS_2_14170 (293 aa).

The first 18 residues, 1–18 (MRFSLALAAAGLAQTAFA), serve as a signal peptide directing secretion. N-linked (GlcNAc...) asparagine glycosylation occurs at Asn-60. Residue His-206 participates in Zn(2+) binding. The active site involves Glu-207. His-210 contributes to the Zn(2+) binding site. Cys-242 and Cys-269 are disulfide-bonded.

This sequence belongs to the peptidase M43B family.

Its subcellular location is the secreted. Secreted metalloproteinase that allows assimilation of proteinaceous substrates. This Podospora anserina (strain S / ATCC MYA-4624 / DSM 980 / FGSC 10383) (Pleurage anserina) protein is Extracellular metalloprotease PODANS_2_14170.